The following is a 198-amino-acid chain: Holliday junction resolvase RecU (198 aa).

The Mg(2+) site is built by T83, D85, E98, and Q117.

The protein belongs to the RecU family. It depends on Mg(2+) as a cofactor.

It localises to the cytoplasm. The catalysed reaction is Endonucleolytic cleavage at a junction such as a reciprocal single-stranded crossover between two homologous DNA duplexes (Holliday junction).. In terms of biological role, endonuclease that resolves Holliday junction intermediates in genetic recombination. Cleaves mobile four-strand junctions by introducing symmetrical nicks in paired strands. Promotes annealing of linear ssDNA with homologous dsDNA. Required for DNA repair, homologous recombination and chromosome segregation. This Streptococcus thermophilus (strain CNRZ 1066) protein is Holliday junction resolvase RecU.